Reading from the N-terminus, the 271-residue chain is Shikimate dehydrogenase (NADP(+)) (271 aa).

Residues 14–16 (SKS) and threonine 61 each bind shikimate. Lysine 65 (proton acceptor) is an active-site residue. 2 residues coordinate shikimate: asparagine 86 and aspartate 102. NADP(+)-binding positions include 126-130 (GAGGA), 149-154 (NRTFSR), and methionine 213. Residue tyrosine 215 participates in shikimate binding. Glycine 238 contacts NADP(+).

This sequence belongs to the shikimate dehydrogenase family. Homodimer.

It catalyses the reaction shikimate + NADP(+) = 3-dehydroshikimate + NADPH + H(+). Its pathway is metabolic intermediate biosynthesis; chorismate biosynthesis; chorismate from D-erythrose 4-phosphate and phosphoenolpyruvate: step 4/7. Its function is as follows. Involved in the biosynthesis of the chorismate, which leads to the biosynthesis of aromatic amino acids. Catalyzes the reversible NADPH linked reduction of 3-dehydroshikimate (DHSA) to yield shikimate (SA). This Histophilus somni (strain 2336) (Haemophilus somnus) protein is Shikimate dehydrogenase (NADP(+)).